Consider the following 342-residue polypeptide: Cytoplasmic tRNA 2-thiolation protein 1 (342 aa).

It belongs to the TtcA family. CTU1/NCS6/ATPBD3 subfamily.

Its subcellular location is the cytoplasm. It participates in tRNA modification; 5-methoxycarbonylmethyl-2-thiouridine-tRNA biosynthesis. In terms of biological role, plays a central role in 2-thiolation of mcm(5)S(2)U at tRNA wobble positions of tRNA(Lys), tRNA(Glu) and tRNA(Gln). Directly binds tRNAs and probably acts by catalyzing adenylation of tRNAs, an intermediate required for 2-thiolation. It is unclear whether it acts as a sulfurtransferase that transfers sulfur from thiocarboxylated URM1 onto the uridine of tRNAs at wobble position. The polypeptide is Cytoplasmic tRNA 2-thiolation protein 1 (Anopheles gambiae (African malaria mosquito)).